A 264-amino-acid polypeptide reads, in one-letter code: Protein-L-isoaspartate O-methyltransferase (264 aa).

Residues 1-49 (MRKPVGSKDGSGVYSRQGLDGYTPANSNTRISTATLPRPEPLRPAASSA) form a disordered region. The span at 24–35 (PANSNTRISTAT) shows a compositional bias: polar residues. S112 is a catalytic residue.

The protein belongs to the methyltransferase superfamily. L-isoaspartyl/D-aspartyl protein methyltransferase family.

Its subcellular location is the cytoplasm. It catalyses the reaction [protein]-L-isoaspartate + S-adenosyl-L-methionine = [protein]-L-isoaspartate alpha-methyl ester + S-adenosyl-L-homocysteine. In terms of biological role, catalyzes the methyl esterification of L-isoaspartyl residues in peptides and proteins that result from spontaneous decomposition of normal L-aspartyl and L-asparaginyl residues. It plays a role in the repair and/or degradation of damaged proteins. In Bordetella avium (strain 197N), this protein is Protein-L-isoaspartate O-methyltransferase.